The sequence spans 284 residues: Protein phosphatase 1 regulatory subunit 3B (284 aa).

The PP1-binding motif motif lies at 61–64; that stretch reads RVSF. The CBM21 domain maps to 124–232; it reads RNRLQTDHVC…SNKGKNYRII (109 aa). At Ser-260 the chain carries Phosphoserine.

In terms of assembly, interacts with glycogen, PPP1CC catalytic subunit of PP1 and PYGL. Associates with glycogen particles. Forms complexes with debranching enzyme, glycogen phosphorylase, glycogen synthase and phosphorylase kinase which is necessary for its regulation of PP1 activity.

In terms of biological role, acts as a glycogen-targeting subunit for phosphatase PP1. Facilitates interaction of the PP1 with enzymes of the glycogen metabolism and regulates its activity. Suppresses the rate at which PP1 dephosphorylates (inactivates) glycogen phosphorylase and enhances the rate at which it activates glycogen synthase and therefore limits glycogen breakdown. Its activity is inhibited by PYGL, resulting in inhibition of the glycogen synthase and glycogen phosphorylase phosphatase activities of PP1. Dramatically increases basal and insulin-stimulated glycogen synthesis upon overexpression in hepatocytes. This Bos taurus (Bovine) protein is Protein phosphatase 1 regulatory subunit 3B (PPP1R3B).